A 631-amino-acid polypeptide reads, in one-letter code: tRNA uridine 5-carboxymethylaminomethyl modification enzyme MnmG (631 aa).

Residues 15–20 (GGGHAG), Val-127, and Ser-182 each bind FAD. Position 275–289 (275–289 (GPRYCPSIEDKIVRF)) interacts with NAD(+). Gln-372 is an FAD binding site.

It belongs to the MnmG family. Homodimer. Heterotetramer of two MnmE and two MnmG subunits. Requires FAD as cofactor.

It is found in the cytoplasm. NAD-binding protein involved in the addition of a carboxymethylaminomethyl (cmnm) group at the wobble position (U34) of certain tRNAs, forming tRNA-cmnm(5)s(2)U34. The chain is tRNA uridine 5-carboxymethylaminomethyl modification enzyme MnmG from Buchnera aphidicola subsp. Schizaphis graminum (strain Sg).